The primary structure comprises 332 residues: Glycerol-3-phosphate dehydrogenase [NAD(P)+] (332 aa).

Residues W11, R30, and K108 each contribute to the NADPH site. Positions 108, 137, and 139 each coordinate sn-glycerol 3-phosphate. A141 lines the NADPH pocket. Positions 192, 245, 255, 256, and 257 each coordinate sn-glycerol 3-phosphate. K192 serves as the catalytic Proton acceptor. An NADPH-binding site is contributed by R256. The NADPH site is built by V280 and E282.

This sequence belongs to the NAD-dependent glycerol-3-phosphate dehydrogenase family.

The protein resides in the cytoplasm. The catalysed reaction is sn-glycerol 3-phosphate + NAD(+) = dihydroxyacetone phosphate + NADH + H(+). The enzyme catalyses sn-glycerol 3-phosphate + NADP(+) = dihydroxyacetone phosphate + NADPH + H(+). Its pathway is membrane lipid metabolism; glycerophospholipid metabolism. Catalyzes the reduction of the glycolytic intermediate dihydroxyacetone phosphate (DHAP) to sn-glycerol 3-phosphate (G3P), the key precursor for phospholipid synthesis. The polypeptide is Glycerol-3-phosphate dehydrogenase [NAD(P)+] (Burkholderia vietnamiensis (strain G4 / LMG 22486) (Burkholderia cepacia (strain R1808))).